Reading from the N-terminus, the 415-residue chain is Sphingomyelin synthase-related protein 1 (415 aa).

Residues tryptophan 12–isoleucine 78 form the SAM domain. The next 4 membrane-spanning stretches (helical) occupy residues isoleucine 153–valine 173, phenylalanine 201–leucine 221, leucine 232–leucine 252, and phenylalanine 277–methionine 297. Residue histidine 301 is part of the active site. A helical transmembrane segment spans residues phenylalanine 322–histidine 342. Catalysis depends on residues histidine 344 and aspartate 348. The chain crosses the membrane as a helical span at residues isoleucine 347 to alanine 367. Residues asparagine 368–glycine 415 are Cytoplasmic-facing.

Belongs to the sphingomyelin synthase family.

It is found in the endoplasmic reticulum membrane. It catalyses the reaction an N-acylsphing-4-enine + a 1,2-diacyl-sn-glycero-3-phosphoethanolamine = an N-acylsphing-4-enine 1-phosphoethanolamine + a 1,2-diacyl-sn-glycerol. It carries out the reaction an N-acylsphinganine + a 1,2-diacyl-sn-glycero-3-phosphoethanolamine = an N-acylsphinganine-1-phosphoethanolamine + a 1,2-diacyl-sn-glycerol. The enzyme catalyses an N-acyl-(4R)-4-hydroxysphinganine + a 1,2-diacyl-sn-glycero-3-phosphoethanolamine = an N-acyl-(4R)-4-hydroxysphinganine-1-phosphoethanolamine + a 1,2-diacyl-sn-glycerol. The catalysed reaction is N-hexadecanoylsphinganine + a 1,2-diacyl-sn-glycero-3-phosphoethanolamine = N-hexadecanoyl-sphinganine-1-phosphoethanolamine + a 1,2-diacyl-sn-glycerol. It catalyses the reaction N-hexadecanoyl-(4R)-hydroxysphinganine + a 1,2-diacyl-sn-glycero-3-phosphoethanolamine = N-hexadecanoyl-(4R)-hydroxysphinganine-1-phosphoethanolamine + a 1,2-diacyl-sn-glycerol. The protein operates within sphingolipid metabolism. Synthesizes sphingolipids through transfer of a phosphatidyl head group from a glycerophospholipid on to the primary hydroxyl of a ceramide in the lumen of the endoplasmic reticulum. Catalyzes the synthesis of ceramide phosphoethanolamines (CPEs) (such as N-acylsphing-4-enine 1-phosphoethanolamine) by transferring phosphoethanolamine head group, which is smaller and more hydrophilic than the phosphocholine (PC) headgroup transferred in the canonical sphingomyelin synthesis (SMS) reaction by SMS1 or SMS2, from a phosphatidylethanolamine (1,2-diacyl-sn-glycero-3-phosphoethanolamine, PE) to a ceramide (such as N-acylsphing-4-enine). The larger PC prevents an efficient fit in the enzyme's catalytic pocket, leading to little or no SMS activity. In vitro, in the absence of ceramide, it has PLC activity with preference for phosphatidylinositol and phosphatidic acid, but also hydrolyzes phosphatidylethanolamine. In Homo sapiens (Human), this protein is Sphingomyelin synthase-related protein 1.